Here is a 184-residue protein sequence, read N- to C-terminus: ATP synthase subunit b, chloroplastic (184 aa).

Residues 27–49 (LATNPINLSVVLGVLIFFGKGVL) traverse the membrane as a helical segment.

Belongs to the ATPase B chain family. As to quaternary structure, F-type ATPases have 2 components, F(1) - the catalytic core - and F(0) - the membrane proton channel. F(1) has five subunits: alpha(3), beta(3), gamma(1), delta(1), epsilon(1). F(0) has four main subunits: a(1), b(1), b'(1) and c(10-14). The alpha and beta chains form an alternating ring which encloses part of the gamma chain. F(1) is attached to F(0) by a central stalk formed by the gamma and epsilon chains, while a peripheral stalk is formed by the delta, b and b' chains.

Its subcellular location is the plastid. The protein resides in the chloroplast thylakoid membrane. F(1)F(0) ATP synthase produces ATP from ADP in the presence of a proton or sodium gradient. F-type ATPases consist of two structural domains, F(1) containing the extramembraneous catalytic core and F(0) containing the membrane proton channel, linked together by a central stalk and a peripheral stalk. During catalysis, ATP synthesis in the catalytic domain of F(1) is coupled via a rotary mechanism of the central stalk subunits to proton translocation. Its function is as follows. Component of the F(0) channel, it forms part of the peripheral stalk, linking F(1) to F(0). The protein is ATP synthase subunit b, chloroplastic of Oenothera argillicola (Appalachian evening primrose).